The primary structure comprises 364 residues: tRNA N6-adenosine threonylcarbamoyltransferase (364 aa).

Fe cation-binding residues include H115 and H119. Substrate-binding positions include 137 to 141 (LVSGG), D170, G183, and N288. Residue D316 coordinates Fe cation.

Belongs to the KAE1 / TsaD family. Fe(2+) is required as a cofactor.

It is found in the cytoplasm. It catalyses the reaction L-threonylcarbamoyladenylate + adenosine(37) in tRNA = N(6)-L-threonylcarbamoyladenosine(37) in tRNA + AMP + H(+). Its function is as follows. Required for the formation of a threonylcarbamoyl group on adenosine at position 37 (t(6)A37) in tRNAs that read codons beginning with adenine. Is involved in the transfer of the threonylcarbamoyl moiety of threonylcarbamoyl-AMP (TC-AMP) to the N6 group of A37, together with TsaE and TsaB. TsaD likely plays a direct catalytic role in this reaction. In Bartonella bacilliformis (strain ATCC 35685 / KC583 / Herrer 020/F12,63), this protein is tRNA N6-adenosine threonylcarbamoyltransferase.